The sequence spans 660 residues: tRNA 5-methylaminomethyl-2-thiouridine biosynthesis bifunctional protein MnmC (660 aa).

The tract at residues 1 to 242 (MTDRIVPATL…KRAMLVGEFA (242 aa)) is tRNA (mnm(5)s(2)U34)-methyltransferase. Positions 266–660 (IGAGLAGCAV…VRALRHGRVA (395 aa)) are FAD-dependent cmnm(5)s(2)U34 oxidoreductase.

The protein in the N-terminal section; belongs to the methyltransferase superfamily. tRNA (mnm(5)s(2)U34)-methyltransferase family. It in the C-terminal section; belongs to the DAO family. It depends on FAD as a cofactor.

It localises to the cytoplasm. It carries out the reaction 5-aminomethyl-2-thiouridine(34) in tRNA + S-adenosyl-L-methionine = 5-methylaminomethyl-2-thiouridine(34) in tRNA + S-adenosyl-L-homocysteine + H(+). Functionally, catalyzes the last two steps in the biosynthesis of 5-methylaminomethyl-2-thiouridine (mnm(5)s(2)U) at the wobble position (U34) in tRNA. Catalyzes the FAD-dependent demodification of cmnm(5)s(2)U34 to nm(5)s(2)U34, followed by the transfer of a methyl group from S-adenosyl-L-methionine to nm(5)s(2)U34, to form mnm(5)s(2)U34. The protein is tRNA 5-methylaminomethyl-2-thiouridine biosynthesis bifunctional protein MnmC of Burkholderia mallei (strain NCTC 10247).